The primary structure comprises 267 residues: Ribosomal RNA small subunit methyltransferase A (267 aa).

S-adenosyl-L-methionine-binding residues include N18, L20, G45, E66, D91, and N112.

It belongs to the class I-like SAM-binding methyltransferase superfamily. rRNA adenine N(6)-methyltransferase family. RsmA subfamily.

The protein resides in the cytoplasm. It carries out the reaction adenosine(1518)/adenosine(1519) in 16S rRNA + 4 S-adenosyl-L-methionine = N(6)-dimethyladenosine(1518)/N(6)-dimethyladenosine(1519) in 16S rRNA + 4 S-adenosyl-L-homocysteine + 4 H(+). In terms of biological role, specifically dimethylates two adjacent adenosines (A1518 and A1519) in the loop of a conserved hairpin near the 3'-end of 16S rRNA in the 30S particle. May play a critical role in biogenesis of 30S subunits. This Shewanella sediminis (strain HAW-EB3) protein is Ribosomal RNA small subunit methyltransferase A.